Reading from the N-terminus, the 591-residue chain is Aspartate--tRNA ligase (591 aa).

Glu171 serves as a coordination point for L-aspartate. The interval 195–198 is aspartate; that stretch reads QLFK. Arg217 contributes to the L-aspartate binding site. ATP contacts are provided by residues 217-219 and Gln226; that span reads RDE. His448 lines the L-aspartate pocket. Glu482 serves as a coordination point for ATP. An L-aspartate-binding site is contributed by Arg489. 534–537 is a binding site for ATP; the sequence is GLDR.

This sequence belongs to the class-II aminoacyl-tRNA synthetase family. Type 1 subfamily. As to quaternary structure, homodimer.

It localises to the cytoplasm. It catalyses the reaction tRNA(Asp) + L-aspartate + ATP = L-aspartyl-tRNA(Asp) + AMP + diphosphate. In terms of biological role, catalyzes the attachment of L-aspartate to tRNA(Asp) in a two-step reaction: L-aspartate is first activated by ATP to form Asp-AMP and then transferred to the acceptor end of tRNA(Asp). The protein is Aspartate--tRNA ligase of Edwardsiella ictaluri (strain 93-146).